Here is a 197-residue protein sequence, read N- to C-terminus: Guanylate kinase (197 aa).

One can recognise a Guanylate kinase-like domain in the interval 6 to 191; the sequence is SKLIILSGPS…CVAQIEKIIS (186 aa). 13–20 provides a ligand contact to ATP; it reads GPSGVGKG.

Belongs to the guanylate kinase family.

Its subcellular location is the cytoplasm. The catalysed reaction is GMP + ATP = GDP + ADP. In terms of biological role, essential for recycling GMP and indirectly, cGMP. This is Guanylate kinase from Mesomycoplasma hyopneumoniae (strain 232) (Mycoplasma hyopneumoniae).